The primary structure comprises 107 residues: Phosphoribosyl-ATP pyrophosphatase (107 aa).

This sequence belongs to the PRA-PH family.

It localises to the cytoplasm. It catalyses the reaction 1-(5-phospho-beta-D-ribosyl)-ATP + H2O = 1-(5-phospho-beta-D-ribosyl)-5'-AMP + diphosphate + H(+). It functions in the pathway amino-acid biosynthesis; L-histidine biosynthesis; L-histidine from 5-phospho-alpha-D-ribose 1-diphosphate: step 2/9. In Neisseria gonorrhoeae (strain ATCC 700825 / FA 1090), this protein is Phosphoribosyl-ATP pyrophosphatase.